We begin with the raw amino-acid sequence, 546 residues long: Sulfite oxidase, mitochondrial (546 aa).

The N-terminal 80 residues, 1-80 (MLLQLYRSVV…YHEHRCRASQ (80 aa)), are a transit peptide targeting the mitochondrion. In terms of domain architecture, Cytochrome b5 heme-binding spans 83 to 162 (PRMYSKEDVR…LAEYKIGELN (80 aa)). Histidine 119 is a binding site for heme b. At serine 124 the chain carries Phosphoserine. Heme b contacts are provided by histidine 144, glutamine 146, and histidine 148. The tract at residues 166–175 (SMSPSVEASD) is hinge. The interval 176-402 (PYADDPIRHP…YSHWQRRDYK (227 aa)) is moco domain. Mo-molybdopterin is bound by residues 216-220 (FTRNH), cysteine 265, aspartate 323, histidine 362, arginine 367, and 378-380 (HVK). The tract at residues 403–539 (GFSPSVDWDT…RGVLSNAWHR (137 aa)) is homodimerization.

Homodimer. Heme b serves as cofactor. It depends on Mo-molybdopterin as a cofactor.

It is found in the mitochondrion intermembrane space. It carries out the reaction sulfite + O2 + H2O = sulfate + H2O2. The protein operates within energy metabolism; sulfur metabolism. Its function is as follows. Catalyzes the oxidation of sulfite to sulfate, the terminal reaction in the oxidative degradation of sulfur-containing amino acids. This is Sulfite oxidase, mitochondrial (Suox) from Mus musculus (Mouse).